The chain runs to 395 residues: ATP synthase subunit a (395 aa).

5 helical membrane-spanning segments follow: residues 153-173, 246-266, 273-293, 313-333, and 339-359; these read FTNPSLFMLLTLSLVLLLVYF, HFLITLGLSFSIFIGITIVGF, FLSFLLPAGVPLPLAPFLVLL, MMAGHSSVKILSGFAWTMLCM, and FIGDLGPLFIVLALTGLELGV.

Belongs to the ATPase A chain family. In terms of assembly, F-type ATPases have 2 components, CF(1) - the catalytic core - and CF(0) - the membrane proton channel. CF(1) has five subunits: alpha(3), beta(3), gamma(1), delta(1), epsilon(1). CF(0) has three main subunits: a, b and c.

It localises to the mitochondrion inner membrane. Functionally, mitochondrial membrane ATP synthase (F(1)F(0) ATP synthase or Complex V) produces ATP from ADP in the presence of a proton gradient across the membrane which is generated by electron transport complexes of the respiratory chain. F-type ATPases consist of two structural domains, F(1) - containing the extramembraneous catalytic core and F(0) - containing the membrane proton channel, linked together by a central stalk and a peripheral stalk. During catalysis, ATP synthesis in the catalytic domain of F(1) is coupled via a rotary mechanism of the central stalk subunits to proton translocation. Key component of the proton channel; it may play a direct role in the translocation of protons across the membrane. The chain is ATP synthase subunit a (ATP6) from Nicotiana tabacum (Common tobacco).